The chain runs to 477 residues: MSKAKDKAIVSAAQASTAYSQIDSFSHLYDRGGNLTINGKPSYTVDQAATQLLRDGAAYRDFDGNGKIDLTYTFLTSASSSTMNKHGISGFSQFNAQQKAQAALAMQSWSDVANVTFTEKASGGDGHMTFGNYSSGQDGAAAFAYLPGTGAGYDGTSWYLTNNSYTPNKTPDLNNYGRQTLTHEIGHTLGLAHPGDYNAGEGAPTYNDATYGQDTRGYSLMSYWSESNTNQNFSKGGVEAYASGPLIDDIAAIQKLYGANYNTRAGDTTYGFNSNTGRDFLSATSNADKLVFSVWDGGGNDTLDFSGFTQNQKINLNEASFSDVGGLVGNVSIAKGVTIENAFGGAGNDLIIGNNAANVIKGGAGNDLIYGAGGADQLWGGAGNDTFVFGASSDSKPGAADKIFDFTSGSDKIDLSGITKGAGLTFVNAFTGHAGDAVLTYAAGTNLGTLAVDFSGHGVADFLVTTVGQAAVSDIVA.

The first 20 residues, 1 to 20, serve as a signal peptide directing secretion; sequence MSKAKDKAIVSAAQASTAYS. Position 183 (His183) interacts with Zn(2+). Glu184 is a catalytic residue. Zn(2+) contacts are provided by His187 and His193. Ca(2+) is bound by residues Arg264, Gly266, Thr268, Asp296, Gly298, Gly299, Asp301, Thr338, Glu340, Gly345, Gly347, Asp349, Asn354, Ala356, Asn358, Gly362, Gly363, Ala364, Gly365, Asp367, Gly371, Ala372, Gly373, Gly374, Asp376, Gly380, Gly381, Ala382, Gly383, Asp385, Asp394, Asp401, Asp411, Asp453, Ser455, and Asp461. Hemolysin-type calcium-binding repeat units follow at residues 343 to 360, 361 to 378, and 379 to 391; these read FGGAGNDLIIGNNAANVI, KGGAGNDLIYGAGGADQL, and WGGAGNDTFVFGA.

This sequence belongs to the peptidase M10B family. The cofactor is Ca(2+). Zn(2+) serves as cofactor.

It localises to the secreted. With respect to regulation, is completely inhibited by the metal cation chelators 1,10-phenanthroline and EDTA, but PMSF, pepstatin A and E-64 have no effect on activity. Its function is as follows. Peptidase able to cleave azocasein and the milk substrates beta-casein and Na-caseinate. Can withstand UHT processing of milk, and is able to spoil UHT milk over the storage period. The chain is Metallopeptidase AprA from Pseudomonas marginalis (Pseudomonas panacis).